The following is a 172-amino-acid chain: Ribosome maturation factor RimM (172 aa).

One can recognise a PRC barrel domain in the interval 97–170; the sequence is ENEFYFHEII…KITIEVMEGL (74 aa).

This sequence belongs to the RimM family. Binds ribosomal protein uS19.

It is found in the cytoplasm. In terms of biological role, an accessory protein needed during the final step in the assembly of 30S ribosomal subunit, possibly for assembly of the head region. Essential for efficient processing of 16S rRNA. May be needed both before and after RbfA during the maturation of 16S rRNA. It has affinity for free ribosomal 30S subunits but not for 70S ribosomes. This chain is Ribosome maturation factor RimM, found in Listeria monocytogenes serovar 1/2a (strain ATCC BAA-679 / EGD-e).